The primary structure comprises 540 residues: Glucose-6-phosphate isomerase (540 aa).

Residue Glu-350 is the Proton donor of the active site. Residues His-381 and Lys-503 contribute to the active site.

The protein belongs to the GPI family.

The protein resides in the cytoplasm. The enzyme catalyses alpha-D-glucose 6-phosphate = beta-D-fructose 6-phosphate. It participates in carbohydrate biosynthesis; gluconeogenesis. It functions in the pathway carbohydrate degradation; glycolysis; D-glyceraldehyde 3-phosphate and glycerone phosphate from D-glucose: step 2/4. Functionally, catalyzes the reversible isomerization of glucose-6-phosphate to fructose-6-phosphate. The chain is Glucose-6-phosphate isomerase from Burkholderia multivorans (strain ATCC 17616 / 249).